Here is a 238-residue protein sequence, read N- to C-terminus: DNA repair protein RecO (238 aa).

The protein belongs to the RecO family.

Its function is as follows. Involved in DNA repair and RecF pathway recombination. The protein is DNA repair protein RecO of Anaplasma marginale (strain St. Maries).